A 260-amino-acid chain; its full sequence is RxLR effector protein BLR38 (260 aa).

Positions 1-18 are cleaved as a signal peptide; that stretch reads MHCTVFFLLIACAKSSYG. A RxLR motif is present at residues 46-49; the sequence is RLLR. Positions 136 to 148 match the Nuclear localuization signal (NLS) motif; it reads MPSSRKRPRALDE.

This sequence belongs to the RxLR effector family.

It localises to the secreted. It is found in the host nucleus. Secreted effector that triggers a robust hypersensitive response (HR) in Lactuca serriola LS102. The response to BLN06 was visible as strong necrosis. Although effector recognition is frequently associated with single dominant R gene loci, the recognition of BLR38 requires 2 unlinked loci that display incomplete dominance. The polypeptide is RxLR effector protein BLR38 (Bremia lactucae (Lettuce downy mildew)).